The chain runs to 118 residues: Na(+)/H(+) antiporter subunit G1 (118 aa).

The next 3 helical transmembrane spans lie at 4–24 (IILI…SALA), 38–58 (AHAA…GTFL), and 60–80 (FIAT…FVLI).

The protein belongs to the CPA3 antiporters (TC 2.A.63) subunit G family. May form a heterooligomeric complex that consists of seven subunits: mnhA1, mnhB1, mnhC1, mnhD1, mnhE1, mnhF1 and mnhG1.

The protein localises to the cell membrane. In terms of biological role, mnh complex is a Na(+)/H(+) antiporter involved in Na(+) excretion. This Staphylococcus aureus (strain Mu3 / ATCC 700698) protein is Na(+)/H(+) antiporter subunit G1 (mnhG1).